A 772-amino-acid polypeptide reads, in one-letter code: PDZ domain-containing protein 4 (772 aa).

Residues 136–221 form the PDZ domain; the sequence is EVELCKNSHQ…NISLLVARPE (86 aa). The disordered stretch occupies residues 239–320; sequence DFGSENEGDL…TNTPGSLRKF (82 aa). S242 carries the phosphoserine modification. Over residues 287 to 303 the composition is skewed to basic and acidic residues; it reads RTDESTRNEESSEHDLL. Residues 394–424 are a coiled coil; that stretch reads VNRNESLGHEMAMLEEELRHLEFKCRNILRA. The interval 450–573 is disordered; it reads ASEPKKHELS…VGPEGSPYLS (124 aa). Residues 452–472 show a composition bias toward basic and acidic residues; that stretch reads EPKKHELSDISELPEKSDKDS. S459 carries the phosphoserine modification. Composition is skewed to polar residues over residues 473-484 and 502-511; these read TSAYNTGESCRS and AGNSNLNRTP. Residues 535–552 are compositionally biased toward basic and acidic residues; it reads LSRDPEVGRRQHTEERVR.

It localises to the cytoplasm. The protein resides in the cell cortex. The sequence is that of PDZ domain-containing protein 4 (Pdzd4) from Mus musculus (Mouse).